A 513-amino-acid polypeptide reads, in one-letter code: Maturase K (513 aa).

Belongs to the intron maturase 2 family. MatK subfamily.

It is found in the plastid. The protein resides in the chloroplast. In terms of biological role, usually encoded in the trnK tRNA gene intron. Probably assists in splicing its own and other chloroplast group II introns. This Saccharum officinarum (Sugarcane) protein is Maturase K.